The following is a 350-amino-acid chain: Cytochrome c biogenesis protein CcsA (350 aa).

The next 8 helical transmembrane spans lie at 23–43 (NVAFAISLGAMLFYWGGAAFP), 47–67 (LLAELGLAGMIGANLTMAALL), 82–102 (LYESLFFLAWGITALHLLALH), 108–128 (WVGVMTAPVVTGIVAFAALVL), 153–173 (VMLLAYAALLVGSLLSISFLI), 258–278 (LIGLGFPLLTIGIIAGAVWAN), 293–313 (WALITWLVFAAYLHARITKGW), and 319–339 (ALLASLGFGVVWVCYLGVNFL).

It belongs to the CcmF/CycK/Ccl1/NrfE/CcsA family. As to quaternary structure, may interact with ccs1.

The protein resides in the cellular thylakoid membrane. Required during biogenesis of c-type cytochromes (cytochrome c6 and cytochrome f) at the step of heme attachment. The chain is Cytochrome c biogenesis protein CcsA from Synechococcus sp. (strain JA-2-3B'a(2-13)) (Cyanobacteria bacterium Yellowstone B-Prime).